Consider the following 147-residue polypeptide: UPF0047 protein sll1880 (147 aa).

The protein belongs to the UPF0047 family.

In Synechocystis sp. (strain ATCC 27184 / PCC 6803 / Kazusa), this protein is UPF0047 protein sll1880.